The primary structure comprises 363 residues: 3-isopropylmalate dehydrogenase (363 aa).

79–92 (GPKWEHLPPNDQPE) lines the NAD(+) pocket. Substrate is bound by residues Arg100, Arg110, Arg139, and Asp228. Mg(2+) is bound by residues Asp228, Asp252, and Asp256. NAD(+) is bound at residue 286-298 (GSAPDIAGKNIAN).

This sequence belongs to the isocitrate and isopropylmalate dehydrogenases family. LeuB type 1 subfamily. As to quaternary structure, homodimer. Mg(2+) serves as cofactor. It depends on Mn(2+) as a cofactor.

It localises to the cytoplasm. The catalysed reaction is (2R,3S)-3-isopropylmalate + NAD(+) = 4-methyl-2-oxopentanoate + CO2 + NADH. It participates in amino-acid biosynthesis; L-leucine biosynthesis; L-leucine from 3-methyl-2-oxobutanoate: step 3/4. In terms of biological role, catalyzes the oxidation of 3-carboxy-2-hydroxy-4-methylpentanoate (3-isopropylmalate) to 3-carboxy-4-methyl-2-oxopentanoate. The product decarboxylates to 4-methyl-2 oxopentanoate. The chain is 3-isopropylmalate dehydrogenase from Aliivibrio fischeri (strain ATCC 700601 / ES114) (Vibrio fischeri).